Reading from the N-terminus, the 438-residue chain is 23S rRNA (uracil(1939)-C(5))-methyltransferase RlmD (438 aa).

A TRAM domain is found at 4-68; it reads FYTPGRRTAT…RHFARGRVTR (65 aa). [4Fe-4S] cluster is bound by residues Cys81, Cys87, Cys90, and Cys167. S-adenosyl-L-methionine-binding residues include Gln269, Phe298, Asn303, Glu319, Asn346, and Asp367. Residue Cys393 is the Nucleophile of the active site.

This sequence belongs to the class I-like SAM-binding methyltransferase superfamily. RNA M5U methyltransferase family. RlmD subfamily.

It catalyses the reaction uridine(1939) in 23S rRNA + S-adenosyl-L-methionine = 5-methyluridine(1939) in 23S rRNA + S-adenosyl-L-homocysteine + H(+). In terms of biological role, catalyzes the formation of 5-methyl-uridine at position 1939 (m5U1939) in 23S rRNA. The polypeptide is 23S rRNA (uracil(1939)-C(5))-methyltransferase RlmD (Edwardsiella ictaluri (strain 93-146)).